A 299-amino-acid chain; its full sequence is MARAQNEAASEVDGVLNLLKPPGMTSHDVVAFVRRALGVKKAGHTGTLDPGVAGVLPVCVGRATRLAEYIAGSDKAYRAEITFGVATDTQDGFGEVVAEADASHLTRGDVAYALTRFHGPIEQVPPMVSAVKVGGKRLYELARKGVEVEREPRRVFIHRLQLLDFRPGPRPVAYIDVVCSKGTYVRTLAHDLGRFLQVGAHLSYLVRTRSGPFVLAQAATLEELAAGKARLLPPAAALGDMPRVTVSGRAAARVLHGVAPAVRVEHPDGTTVAVVAANGALLALAEADGGGLRLRKVFG.

Catalysis depends on D49, which acts as the Nucleophile. Positions 241–299 (MPRVTVSGRAAARVLHGVAPAVRVEHPDGTTVAVVAANGALLALAEADGGGLRLRKVFG) constitute a PUA domain.

This sequence belongs to the pseudouridine synthase TruB family. Type 1 subfamily.

The catalysed reaction is uridine(55) in tRNA = pseudouridine(55) in tRNA. Responsible for synthesis of pseudouridine from uracil-55 in the psi GC loop of transfer RNAs. The sequence is that of tRNA pseudouridine synthase B from Symbiobacterium thermophilum (strain DSM 24528 / JCM 14929 / IAM 14863 / T).